The following is a 2635-amino-acid chain: Protein unc-79 homolog (2635 aa).

A phosphoserine mark is found at Ser754 and Ser758. Disordered regions lie at residues 907–929 (GPEG…NCTE), 1538–1575 (IAQR…DARR), 1607–1678 (LIDL…SVLS), 1693–1832 (SKDF…FKIQ), 1863–1909 (LGEQ…TQYR), and 1929–1950 (LEHQ…IQPG). The segment covering 1666 to 1678 (SSPSVPSHPSVLS) has biased composition (low complexity). The segment covering 1699 to 1713 (KDSGNNQSAGNTDSA) has biased composition (polar residues). The span at 1761-1775 (LDDHPDPGTEGEKPG) shows a compositional bias: basic and acidic residues. Composition is skewed to polar residues over residues 1897-1909 (ETSS…TQYR) and 1929-1947 (LEHQ…TEQI). Helical transmembrane passes span 2223-2243 (LLSF…ELCG) and 2466-2486 (VLHM…TVYC).

It belongs to the unc-79 family. NALCN complex consists of NALCN and auxiliary subunits, UNC79, UNC80 and NACL1. These auxiliary subunits are essential for the NALCN channel function. UNC80 bridges NALCN to UNC79.

The protein resides in the cell membrane. In terms of biological role, auxiliary subunit of the NALCN sodium channel complex, a voltage-gated ion channel responsible for the resting Na(+) permeability that controls neuronal excitability. Activated by neuropeptides substance P, neurotensin, and extracellular calcium that regulates neuronal excitability by controlling the sizes of NALCN-dependent sodium-leak current. The chain is Protein unc-79 homolog (UNC79) from Homo sapiens (Human).